The chain runs to 1749 residues: Kinase non-catalytic C-lobe domain-containing protein 1 (1749 aa).

One can recognise a KIND 1 domain in the interval 37 to 217; the sequence is VSLADILSLR…QDVSESSWRE (181 aa). Disordered regions lie at residues 210–275 and 361–435; these read VSES…SHSR and CRLW…ARQL. Composition is skewed to basic and acidic residues over residues 363–373 and 410–430; these read LWPEQEPEHQL and ADPR…RIPE. One can recognise a KIND 2 domain in the interval 444-608; it reads VSLQDLLSQL…RASICQVYQE (165 aa). Disordered stretches follow at residues 689–871 and 962–1061; these read ARDQ…RPAD and QASP…GGAS. The segment covering 702–717 has biased composition (basic and acidic residues); that stretch reads ERGGQREGEGEEKLSL. Composition is skewed to low complexity over residues 739–748 and 766–779; these read QGAAPEPLGA and PANQ…AAPG. A compositionally biased stretch (basic residues) spans 823 to 833; sequence HGPRHPPKPPR. Positions 853–871 are enriched in basic and acidic residues; the sequence is GERDDQSPDSVPERPRPAD. Position 964 is a phosphoserine (Ser-964). Over residues 980 to 990 the composition is skewed to low complexity; the sequence is SQSPRSPSSKR. Positions 1005–1019 are enriched in polar residues; sequence RTSSRAPCSPTSVSD. Over residues 1040 to 1056 the composition is skewed to basic and acidic residues; it reads VKAERAQQPEAGEDRRP. Positions 1133-1190 form a coiled coil; that stretch reads QQLMMEKRNYRKTLKFYQKLLQKEKRNKGSDVKTMLSKLKGQLEEMKSRVQFLSLVKK. In terms of domain architecture, N-terminal Ras-GEF spans 1246-1371; sequence KARILQAGTP…HLLGLLEVGM (126 aa). In terms of domain architecture, Ras-GEF spans 1468-1719; sequence STHQLFSQLT…SGADISTLAA (252 aa).

As to quaternary structure, interacts (via KIND2) with MAP2; the interaction enhances MAP2 phosphorylation and localizes KNDC1 to dendrites. As to expression, expressed specifically in the cerebral cortex.

It localises to the cell projection. It is found in the dendrite. Its subcellular location is the perikaryon. Functionally, RAS-Guanine nucleotide exchange factor (GEF) that controls the negative regulation of neuronal dendrite growth by mediating a signaling pathway linking RAS and MAP2. May be involved in cellular senescence. This is Kinase non-catalytic C-lobe domain-containing protein 1 from Homo sapiens (Human).